A 227-amino-acid polypeptide reads, in one-letter code: 2-C-methyl-D-erythritol 4-phosphate cytidylyltransferase (227 aa).

Belongs to the IspD/TarI cytidylyltransferase family. IspD subfamily.

It carries out the reaction 2-C-methyl-D-erythritol 4-phosphate + CTP + H(+) = 4-CDP-2-C-methyl-D-erythritol + diphosphate. Its pathway is isoprenoid biosynthesis; isopentenyl diphosphate biosynthesis via DXP pathway; isopentenyl diphosphate from 1-deoxy-D-xylulose 5-phosphate: step 2/6. Functionally, catalyzes the formation of 4-diphosphocytidyl-2-C-methyl-D-erythritol from CTP and 2-C-methyl-D-erythritol 4-phosphate (MEP). The chain is 2-C-methyl-D-erythritol 4-phosphate cytidylyltransferase from Deinococcus geothermalis (strain DSM 11300 / CIP 105573 / AG-3a).